Consider the following 391-residue polypeptide: Small ribosomal subunit protein mS29 (391 aa).

A mitochondrion-targeting transit peptide spans 1 to 17; it reads MLTGITRLFSRVQKLDP. The segment at 30–59 is disordered; that stretch reads NSQVPAERPRTVSRTSDSDPAKHGEQHEGQ. Over residues 45–59 the composition is skewed to basic and acidic residues; the sequence is SDSDPAKHGEQHEGQ. Lys-168 and Lys-200 each carry N6-acetyllysine.

It belongs to the mitochondrion-specific ribosomal protein mS29 family. Component of the mitochondrial ribosome small subunit (28S) which comprises a 12S rRNA and about 30 distinct proteins. Interacts with DELE1. Interacts with NOA1.

It is found in the mitochondrion. It carries out the reaction GTP + H2O = GDP + phosphate + H(+). Its function is as follows. As a component of the mitochondrial small ribosomal subunit, it plays a role in the translation of mitochondrial mRNAs. Involved in mediating interferon-gamma-induced cell death. Displays GTPase activity in vitro. The chain is Small ribosomal subunit protein mS29 from Mus musculus (Mouse).